The sequence spans 332 residues: T-cell surface glycoprotein CD1c3 (332 aa).

Residues 1–17 (MLFLQFLFLDVVLGGSI) form the signal peptide. Topologically, residues 18-300 (TKNVVQENIS…IILYWGHGLS (283 aa)) are extracellular. 4 N-linked (GlcNAc...) asparagine glycosylation sites follow: Asn25, Asn38, Asn75, and Asn146. Disulfide bonds link Cys120/Cys184 and Cys224/Cys279. Positions 205 to 292 (PEVWLSSSPN…HSSLRDQDII (88 aa)) constitute an Ig-like domain. Residues 301–321 (VILITFAVIVPLVLLIILVLL) traverse the membrane as a helical segment. The Cytoplasmic portion of the chain corresponds to 322–332 (CKKCCTYQGIP).

Heterodimer with B2M (beta-2-microglobulin).

Its subcellular location is the cell membrane. The protein resides in the endosome membrane. Functionally, antigen-presenting protein that binds self and non-self lipid and glycolipid antigens and presents them to T-cell receptors on natural killer T-cells. This chain is T-cell surface glycoprotein CD1c3 (CD1C3), found in Cavia porcellus (Guinea pig).